The primary structure comprises 78 residues: Large ribosomal subunit protein bL28 (78 aa).

Belongs to the bacterial ribosomal protein bL28 family.

This Salmonella choleraesuis (strain SC-B67) protein is Large ribosomal subunit protein bL28.